The primary structure comprises 150 residues: MTTRTLRFYALVGFLVFLDQVTKYLAHAYLARDFIVIPNLFRLTLAKNSGAAFSFGTGFSWLFFLLGIIALIFIGWFLPRTTGSIVFLALLQGGIAGNVFDRLFKPPYFGNGEVVDFLNTPLFSGVVFNIADLFILAGVFGTFLFLKGSK.

Helical transmembrane passes span 8–28 (FYAL…LAHA), 58–78 (GFSW…GWFL), and 81–101 (TTGS…NVFD). Active-site residues include aspartate 116 and aspartate 132. The helical transmembrane segment at 126 to 146 (VVFNIADLFILAGVFGTFLFL) threads the bilayer.

Belongs to the peptidase A8 family.

The protein resides in the cell membrane. It carries out the reaction Release of signal peptides from bacterial membrane prolipoproteins. Hydrolyzes -Xaa-Yaa-Zaa-|-(S,diacylglyceryl)Cys-, in which Xaa is hydrophobic (preferably Leu), and Yaa (Ala or Ser) and Zaa (Gly or Ala) have small, neutral side chains.. The protein operates within protein modification; lipoprotein biosynthesis (signal peptide cleavage). Its function is as follows. This protein specifically catalyzes the removal of signal peptides from prolipoproteins. The protein is Lipoprotein signal peptidase of Tropheryma whipplei (strain TW08/27) (Whipple's bacillus).